A 442-amino-acid chain; its full sequence is tRNA-2-methylthio-N(6)-dimethylallyladenosine synthase (442 aa).

The 116-residue stretch at 3 to 118 (KKVFIKTFGC…LPELLNARAA (116 aa)) folds into the MTTase N-terminal domain. Cys12, Cys49, Cys81, Cys155, Cys159, and Cys162 together coordinate [4Fe-4S] cluster. The 234-residue stretch at 141–374 (RVEGSSAFVS…QAVINNNIKD (234 aa)) folds into the Radical SAM core domain. Positions 377 to 440 (DERVGTVQRL…TFTLRGEVVV (64 aa)) constitute a TRAM domain.

Belongs to the methylthiotransferase family. MiaB subfamily. As to quaternary structure, monomer. The cofactor is [4Fe-4S] cluster.

Its subcellular location is the cytoplasm. It catalyses the reaction N(6)-dimethylallyladenosine(37) in tRNA + (sulfur carrier)-SH + AH2 + 2 S-adenosyl-L-methionine = 2-methylsulfanyl-N(6)-dimethylallyladenosine(37) in tRNA + (sulfur carrier)-H + 5'-deoxyadenosine + L-methionine + A + S-adenosyl-L-homocysteine + 2 H(+). Functionally, catalyzes the methylthiolation of N6-(dimethylallyl)adenosine (i(6)A), leading to the formation of 2-methylthio-N6-(dimethylallyl)adenosine (ms(2)i(6)A) at position 37 in tRNAs that read codons beginning with uridine. In Delftia acidovorans (strain DSM 14801 / SPH-1), this protein is tRNA-2-methylthio-N(6)-dimethylallyladenosine synthase.